A 542-amino-acid chain; its full sequence is Glucose-6-phosphate isomerase (542 aa).

The active-site Proton donor is the Glu-353. Catalysis depends on residues His-384 and Lys-508.

This sequence belongs to the GPI family.

It is found in the cytoplasm. The enzyme catalyses alpha-D-glucose 6-phosphate = beta-D-fructose 6-phosphate. It participates in carbohydrate biosynthesis; gluconeogenesis. Its pathway is carbohydrate degradation; glycolysis; D-glyceraldehyde 3-phosphate and glycerone phosphate from D-glucose: step 2/4. In terms of biological role, catalyzes the reversible isomerization of glucose-6-phosphate to fructose-6-phosphate. In Corynebacterium efficiens (strain DSM 44549 / YS-314 / AJ 12310 / JCM 11189 / NBRC 100395), this protein is Glucose-6-phosphate isomerase.